Reading from the N-terminus, the 137-residue chain is Large ribosomal subunit protein uL16 (137 aa).

This sequence belongs to the universal ribosomal protein uL16 family. Part of the 50S ribosomal subunit.

In terms of biological role, binds 23S rRNA and is also seen to make contacts with the A and possibly P site tRNAs. The sequence is that of Large ribosomal subunit protein uL16 from Coxiella burnetii (strain RSA 331 / Henzerling II).